We begin with the raw amino-acid sequence, 1058 residues long: Bromodomain-containing protein 1 (1058 aa).

Over residues 1–12 (MRRKGRCHRGSA) the composition is skewed to basic residues. The disordered stretch occupies residues 1–25 (MRRKGRCHRGSAARHPSSPCSIKHS). Residues 31–80 (LTYAQAQRMVEIEIEGRLHRISIFDPLEIILEDDLTAQEMSECNSNKENS) are interaction with KAT7/HBO1 and histones. At Ser-128 the chain carries Phosphoserine. The PHD-type 1 zinc-finger motif lies at 214 to 264 (DAVCCICMDGECQNSNVILFCDMCNLAVHQECYGVPYIPEGQWLCRHCLQS). The C2HC pre-PHD-type zinc finger occupies 268–301 (PADCVLCPNKGGAFKKTDDDRWGHVVCALWIPEV). A PHD-type 2 zinc finger spans residues 325–389 (LTCYLCKQKG…RKTAYCDVHT (65 aa)). N6-acetyllysine is present on residues Lys-368, Lys-516, and Lys-519. Glycyl lysine isopeptide (Lys-Gly) (interchain with G-Cter in SUMO2) cross-links involve residues Lys-554 and Lys-594. The 105-residue stretch at 562–666 (LRLTPLTVLL…DQGGVVLRQA (105 aa)) folds into the Bromo domain. A compositionally biased stretch (polar residues) spans 754–763 (KLSQQHSQAP). Disordered stretches follow at residues 754–776 (KLSQQHSQAPPTGAGTGGFEDEA) and 791–847 (LETL…AAPR). Residue Ser-803 is modified to Phosphoserine. Lys-903 is modified (N6-acetyllysine). The PWWP domain maps to 929–1012 (PLKVVWAKCS…KSKMVPLGVD (84 aa)). Phosphoserine is present on residues Ser-1052 and Ser-1055.

Component of some HBO1 complexes composed of KAT7/HBO1, MEAF6, ING4 and BRD1/BRPF2. Component of the MOZ/MORF complex composed at least of ING5, KAT6A, KAT6B, MEAF6 and one of BRPF1, BRD1/BRPF2 and BRPF3. Interacts (via PHD-type zinc finger domain) with unmodified histone H3. Interacts (via PWWP domain) with dimethylated and trimethylated 'Lys-79' on histone H3.

Its subcellular location is the nucleus. It localises to the chromosome. Scaffold subunit of various histone acetyltransferase (HAT) complexes, such as the MOZ/MORF and HBO1 complexes, that acts as a regulator of hematopoiesis. Plays a key role in HBO1 complex by directing KAT7/HBO1 specificity towards histone H3 'Lys-14' acetylation (H3K14ac), thereby promoting erythroid differentiation. In Mus musculus (Mouse), this protein is Bromodomain-containing protein 1.